Consider the following 86-residue polypeptide: Protein IDA-LIKE 1 (86 aa).

The N-terminal stretch at 1–27 (MNLSHKTMFMTLYIVFLLIFGSYNATA) is a signal peptide.

Expressed in roots.

It is found in the secreted. The protein resides in the extracellular space. Involved in an ethylene-independent separation step of floral abscission. May act with RLK5 and HSL2 as ligand-receptor pairs. The sequence is that of Protein IDA-LIKE 1 (IDL1) from Arabidopsis thaliana (Mouse-ear cress).